A 138-amino-acid chain; its full sequence is Flagellar assembly factor FliW (138 aa).

It belongs to the FliW family. In terms of assembly, interacts with translational regulator CsrA and flagellin(s).

The protein localises to the cytoplasm. Functionally, acts as an anti-CsrA protein, binds CsrA and prevents it from repressing translation of its target genes, one of which is flagellin. Binds to flagellin and participates in the assembly of the flagellum. The polypeptide is Flagellar assembly factor FliW (Symbiobacterium thermophilum (strain DSM 24528 / JCM 14929 / IAM 14863 / T)).